The chain runs to 693 residues: Polyribonucleotide nucleotidyltransferase (693 aa).

Asp486 and Asp492 together coordinate Mg(2+). The KH domain maps to Pro553–Ile612. Positions Gly622–Lys690 constitute an S1 motif domain.

Belongs to the polyribonucleotide nucleotidyltransferase family. As to quaternary structure, component of the RNA degradosome, which is a multiprotein complex involved in RNA processing and mRNA degradation. The cofactor is Mg(2+).

The protein resides in the cytoplasm. The enzyme catalyses RNA(n+1) + phosphate = RNA(n) + a ribonucleoside 5'-diphosphate. In terms of biological role, involved in mRNA degradation. Catalyzes the phosphorolysis of single-stranded polyribonucleotides processively in the 3'- to 5'-direction. The polypeptide is Polyribonucleotide nucleotidyltransferase (Thioalkalivibrio sulfidiphilus (strain HL-EbGR7)).